The primary structure comprises 159 residues: Protein B1 (159 aa).

A compositionally biased stretch (basic residues) spans 1 to 15; sequence MQKNMKTKKTKKRGR. Disordered regions lie at residues 1 to 100 and 133 to 159; these read MQKN…RTRE and PGHG…DPPR. Positions 16-31 are enriched in basic and acidic residues; the sequence is KEGNTPETERRMEPAR. Positions 85-96 are enriched in basic residues; the sequence is RGRHIHTRGART.

The polypeptide is Protein B1 (B1) (Human herpesvirus 6B (strain Z29) (HHV-6 variant B)).